The following is an 890-amino-acid chain: Potassium/sodium hyperpolarization-activated cyclic nucleotide-gated channel 1 (890 aa).

The interval 1 to 93 is disordered; the sequence is MEGGGKPNSS…AEGPRRQYGF (93 aa). The Cytoplasmic segment spans residues 1 to 142; that stretch reads MEGGGKPNSS…WIIHPYSDFR (142 aa). Low complexity predominate over residues 8–34; sequence NSSSNSRDDGNSVFPAKASATGAGPAA. Positions 62–77 are enriched in gly residues; the sequence is DGGGGGGGGGGGGEEP. Residues 143 to 164 traverse the membrane as a helical segment; that stretch reads FYWDLIMLIMMVGNLVIIPVGI. Residues 165–173 are Extracellular-facing; the sequence is TFFTEQTTT. Residues 174–194 traverse the membrane as a helical segment; sequence PWIIFNVASDTVFLLDLIMNF. The Cytoplasmic portion of the chain corresponds to 195-215; sequence RTGTVNEDSSEIILDPKVIKM. A helical membrane pass occupies residues 216-236; that stretch reads NYLKSWFVVDFISSIPVDYIF. Residues 237 to 260 are Extracellular-facing; sequence LIVEKGMDSEVYKTARALRIVRFT. A helical; Voltage-sensor transmembrane segment spans residues 261–281; the sequence is KILSLLRLLRLSRLIRYIHQW. The Cytoplasmic portion of the chain corresponds to 282–295; the sequence is EEIFHMTYDLASAV. A helical membrane pass occupies residues 296–318; that stretch reads VRIFNLIGMMLLLCHWDGCLQFL. Topologically, residues 319 to 344 are extracellular; sequence VPLLQDFPPDCWVSLNEMVNDSWGKQ. Asparagine 338 carries N-linked (GlcNAc...) asparagine glycosylation. An intramembrane region (pore-forming) is located at residues 345-366; that stretch reads YSYALFKAMSHMLCIGYGAQAP. Residues 358-362 carry the Selectivity filter motif; the sequence is CIGYG. Over 367–371 the chain is Extracellular; the sequence is VSMSD. The chain crosses the membrane as a helical span at residues 372 to 392; that stretch reads LWITMLSMIVGATCYAMFVGH. The Cytoplasmic portion of the chain corresponds to 393–890; the sequence is ATALIQSLDS…AEKPRFASNL (498 aa). The 3',5'-cyclic AMP site is built by glycine 539, glutamate 540, cysteine 542, arginine 549, threonine 550, arginine 590, and arginine 593. Composition is skewed to low complexity over residues 644-691 and 731-749; these read MTTL…PQPS and QQQPQQQVQQSQPPQTQPQ. Disordered regions lie at residues 644–692, 725–796, and 845–890; these read MTTL…QPSA, SQLS…LPHE, and MSSG…ASNL. Residues 770–780 show a composition bias toward polar residues; that stretch reads STQALHNTNLT. Residues 854 to 865 are compositionally biased toward pro residues; sequence RGVPPAPPPPAA. The segment covering 880 to 890 has biased composition (basic and acidic residues); the sequence is DAEKPRFASNL.

This sequence belongs to the potassium channel HCN family. Homotetramer. Heterotetramer with HCN2. The potassium channel is composed of a homo- or heterotetrameric complex of pore-forming subunits. Interacts with KCNE2. Interacts with the SH3 domain of CSK. In terms of tissue distribution, detected in brain, in particular in amygdala and hippocampus, while expression in caudate nucleus, corpus callosum, substantia nigra, subthalamic nucleus and thalamus is very low or not detectable. Detected at very low levels in muscle and pancreas.

It localises to the cell membrane. It carries out the reaction Na(+)(in) = Na(+)(out). The catalysed reaction is K(+)(in) = K(+)(out). With respect to regulation, activated by cAMP, and at 10-100 times higher concentrations, also by cGMP. cAMP binding promotes tetramerization and formation of an active channel. Compared to other family members, cAMP has less stimulatory effect on HCN1 because part of the molecules already contain bound cAMP and form homotetramers when cAMP levels are low, this inherent tetramerization in HCN1 results in a weaker response to increased cAMP. Inhibited by Cs(1+), zatebradine, capsazepine and ZD7288. Functionally, hyperpolarization-activated ion channel that are permeable to sodium and potassium ions. Displays lower selectivity for K(+) over Na(+) ions. Contributes to the native pacemaker currents in heart (If) and in the generation of the I(h) current which controls neuron excitability. Participates in cerebellar mechanisms of motor learning. May mediate responses to sour stimuli. The protein is Potassium/sodium hyperpolarization-activated cyclic nucleotide-gated channel 1 (HCN1) of Homo sapiens (Human).